The primary structure comprises 1192 residues: MPAPEQASLVEEGQPQTRQEAASTGPGMEPETTATTILASVKEQELQFQRLTRELEVERQIVASQLERCRLGAESPSIASTSSTEKSFPWRSTDVPNTGVSKPRVSDAVQPNNYLIRTEPEQGTLYSPEQTSLHESEGSLGNSRSSTQMNSYSDSGYQEAGSFHNSQNVSKADNRQQHSFIGSTNNHVVRNSRAEGQTLVQPSVANRAMRRVSSVPSRAQSPSYVISTGVSPSRGSLRTSLGSGFGSPSVTDPRPLNPSAYSSTTLPAARAASPYSQRPASPTAIRRIGSVTSRQTSNPNGPTPQYQTTARVGSPLTLTDAQTRVASPSQGQVGSSSPKRSGMTAVPQHLGPSLQRTVHDMEQFGQQQYDIYERMVPPRPDSLTGLRSSYASQHSQLGQDLRSAVSPDLHITPIYEGRTYYSPVYRSPNHGTVELQGSQTALYRTGSVGIGNLQRTSSQRSTLTYQRNNYALNTTATYAEPYRPIQYRVQECNYNRLQHAVPADDGTTRSPSIDSIQKDPREFAWRDPELPEVIHMLQHQFPSVQANAAAYLQHLCFGDNKVKMEVCRLGGIKHLVDLLDHRVLEVQKNACGALRNLVFGKSTDENKIAMKNVGGIPALLRLLRKSIDAEVRELVTGVLWNLSSCDAVKMTIIRDALSTLTNTVIVPHSGWNNSSFDDDHKIKFQTSLVLRNTTGCLRNLSSAGEEARKQMRSCEGLVDSLLYVIHTCVNTSDYDSKTVENCVCTLRNLSYRLELEVPQARLLGLNELDDLLGKESPSKDSEPSCWGKKKKKKKRTPQEDQWDGVGPIPGLSKSPKGVEMLWHPSVVKPYLTLLAESSNPATLEGSAGSLQNLSAGNWKFAAYIRAAVRKEKGLPILVELLRMDNDRVVSSVATALRNMALDVRNKELIGKYAMRDLVNRLPGGNGPSVLSDETMAAICCALHEVTSKNMENAKALADSGGIEKLVNITKGRGDRSSLKVVKAAAQVLNTLWQYRDLRSIYKKDGWNQNHFITPVSTLERDRFKSHPSLSTTNQQMSPIIQSVGSTSSSPALLGIRDPRSEYDRTQPPMQYYNSQGDATHKGLYPGSSKPSPIYISSYSSPAREQNRRLQHQQLYYSQDDSNRKNFDAYRLYLQSPHSYEDPYFDDRVHFPASTDYSTQYGLKSTTNYVDFYSTKRPSYRAEQYPGSPDSWV.

The tract at residues 1-31 (MPAPEQASLVEEGQPQTRQEAASTGPGMEPE) is disordered. Residues 36-70 (TILASVKEQELQFQRLTRELEVERQIVASQLERCR) adopt a coiled-coil conformation. The interval 73–262 (AESPSIASTS…PRPLNPSAYS (190 aa)) is disordered. Serine 75 carries the phosphoserine modification. Polar residues predominate over residues 77-86 (SIASTSSTEK). Threonine 84 carries the post-translational modification Phosphothreonine. Phosphoserine is present on residues serine 106, serine 132, serine 136, and serine 139. 3 stretches are compositionally biased toward polar residues: residues 138–156 (GSLG…SDSG), 163–204 (FHNS…QPSV), and 214–230 (SVPS…STGV). 3 positions are modified to phosphoserine: serine 221, serine 231, and serine 236. Residues 231–242 (SPSRGSLRTSLG) show a composition bias toward low complexity. Residues arginine 254 and arginine 270 each carry the omega-N-methylarginine modification. Serine 273 and serine 281 each carry phosphoserine. Residues 290–310 (SVTSRQTSNPNGPTPQYQTTA) form a disordered region. Phosphoserine occurs at positions 314, 327, and 337. Residues 323-348 (TRVASPSQGQVGSSSPKRSGMTAVPQ) are disordered. The span at 325–338 (VASPSQGQVGSSSP) shows a compositional bias: low complexity. Tyrosine 372 carries the phosphotyrosine modification. Phosphoserine is present on residues serine 392, serine 403, and serine 406. Phosphothreonine is present on threonine 412. At tyrosine 415 the chain carries Phosphotyrosine. One copy of the ARM 1 repeat lies at 415–455 (YEGRTYYSPVYRSPNHGTVELQGSQTALYRTGSVGIGNLQR). A phosphoserine mark is found at serine 422, serine 427, and serine 438. Tyrosine 478 is modified (phosphotyrosine). A phosphoserine mark is found at serine 510, serine 512, and serine 515. ARM repeat units lie at residues 518–557 (KDPR…HLCF), 560–599 (NKVK…NLVF), 604–644 (DENK…NLSS), 660–702 (LTNT…NLSS), and 706–751 (EARK…NLSY). Residues 773-782 (GKESPSKDSE) show a composition bias toward basic and acidic residues. Positions 773-810 (GKESPSKDSEPSCWGKKKKKKKRTPQEDQWDGVGPIPG) are disordered. A Phosphoserine modification is found at serine 776. ARM repeat units follow at residues 815-855 (PKGV…NLSA), 862-901 (AYIR…NMAL), and 950-993 (MENA…TLWQ). Phosphothreonine is present on residues threonine 1013 and threonine 1017. A Phosphoserine modification is found at serine 1045. The segment at 1058-1086 (PRSEYDRTQPPMQYYNSQGDATHKGLYPG) is disordered. Residues 1067–1077 (PPMQYYNSQGD) show a composition bias toward polar residues. Phosphoserine occurs at positions 1091, 1100, and 1135.

The protein belongs to the beta-catenin family. In terms of assembly, interacts with PDZD2. Interacts (via the C-terminus) with FRMPD2 (via the PDZ 2 domain). Interacts with RHOA; the interaction is detected at the midbody. Interacts with ECT2; the interaction is detected at the midbody. Interacts with CCDC85B. As to expression, expressed in salivary glands (at protein level). Expressed in arrector pili muscle (at protein level).

It localises to the cell junction. Its subcellular location is the desmosome. The protein localises to the cytoplasm. The protein resides in the cytoskeleton. It is found in the spindle. It localises to the midbody. Its subcellular location is the cell membrane. In terms of biological role, plays a role as a regulator of Rho activity during cytokinesis. May play a role in junctional plaques. In Homo sapiens (Human), this protein is Plakophilin-4 (PKP4).